The sequence spans 937 residues: Alanine--tRNA ligase (937 aa).

Zn(2+) is bound by residues His626, His630, Cys727, and His731.

The protein belongs to the class-II aminoacyl-tRNA synthetase family. It depends on Zn(2+) as a cofactor.

It is found in the cytoplasm. It catalyses the reaction tRNA(Ala) + L-alanine + ATP = L-alanyl-tRNA(Ala) + AMP + diphosphate. Functionally, catalyzes the attachment of alanine to tRNA(Ala) in a two-step reaction: alanine is first activated by ATP to form Ala-AMP and then transferred to the acceptor end of tRNA(Ala). Also edits incorrectly charged Ser-tRNA(Ala) and Gly-tRNA(Ala) via its editing domain. This chain is Alanine--tRNA ligase, found in Opitutus terrae (strain DSM 11246 / JCM 15787 / PB90-1).